The chain runs to 142 residues: Hemoglobin subunit alpha-A (142 aa).

The 141-residue stretch at 2–142 (VLSAADKTNV…VGTVLTAKYR (141 aa)) folds into the Globin domain. An O2-binding site is contributed by His59. His88 contributes to the heme b binding site.

The protein belongs to the globin family. As to quaternary structure, heterotetramer of two alpha chains and two beta chains. Red blood cells.

In terms of biological role, involved in oxygen transport from the lung to the various peripheral tissues. This Anser anser anser (Western greylag goose) protein is Hemoglobin subunit alpha-A (HBAA).